The following is a 388-amino-acid chain: bZIP transcription factor ABI5 homolog (388 aa).

A disordered region spans residues Met1 to Ile36. At Ser44 the chain carries Phosphoserine. The bZIP domain maps to Val302–Glu365. The segment at Arg304–Lys323 is basic motif. Positions Leu330–Leu344 are leucine-zipper. Residues Lys368–Trp388 form a disordered region.

It belongs to the bZIP family. ABI5 subfamily. In terms of assembly, forms homodimers. Interacts with VP1. Interacts with GF14D. Interacts with PP2C51. Interacts with SAPK2. Phosphorylated at Ser-44 by SAPK6. In terms of tissue distribution, expressed in roots, leaves and panicles. Expressed in seeds.

It localises to the nucleus. Functionally, transcription factor that possesses transactivation activity in yeast. Involved in abscisic acid (ABA) signaling pathway. Binds to the G-box motif 5'-CACGTG-3' of TRAB1 gene promoter. Involved in the regulation of pollen maturation. May act as negative regulator of salt stress response. Together with PYL5, PP2C30 and SAPK2, is part of an ABA signaling unit that modulates seed germination and early seedling growth. In Oryza sativa subsp. japonica (Rice), this protein is bZIP transcription factor ABI5 homolog.